The following is a 55-amino-acid chain: Large ribosomal subunit protein bL33 (55 aa).

This sequence belongs to the bacterial ribosomal protein bL33 family.

This is Large ribosomal subunit protein bL33 from Renibacterium salmoninarum (strain ATCC 33209 / DSM 20767 / JCM 11484 / NBRC 15589 / NCIMB 2235).